The following is a 329-amino-acid chain: MSDLTICTHSGSFHADEALACYLLKLLPTYKDSKIIRSRDKSVIEKSTVAVDVGAVYNFEKLRFDHHQSGFTETFDDKHDIKLSSAGLIYKHYGKDIIKQRLDTNDSITELLYQKLYDSMIQELDGVDNGVERYPSDIKPRYQSGSSISARVGHLNQGWNEPQDDEIVNKQFEKAMELMGQYFLDRLDYYGKSWLPCRSIVENALENRKQTHSSGEILILDMFCPWKDHLFSLEQEKDIKTPIKFVLFEDTSGQWRVSAVGINLHSFTLRLPLPEEWRGKRDEELSQISGIEGCVFAHANGFIGGNKTREGALLMAIKTLNQSPKTLLE.

This sequence belongs to the MYG1 family.

The sequence is that of MYG1 protein from Dictyostelium discoideum (Social amoeba).